We begin with the raw amino-acid sequence, 309 residues long: Probable 2,4-dienoyl-CoA reductase 3 [(3E)-enoyl-CoA-producing] (309 aa).

Residues 32–37, R57, and D83 contribute to the NADP(+) site; that span reads GGGTGI. Substrate is bound at residue R57. Residues F116 and S124 each coordinate substrate. Y166 acts as the Proton acceptor in catalysis. Residues K181 and 207 to 210 contribute to the NADP(+) site; that span reads PGPI. R218 provides a ligand contact to substrate.

Belongs to the short-chain dehydrogenases/reductases (SDR) family. 2,4-dienoyl-CoA reductase subfamily.

The enzyme catalyses a (2E,4E)-dienoyl-CoA + NADPH + H(+) = a 4,5-saturated-(3E)-enoyl-CoA + NADP(+). It carries out the reaction a (2E,4Z)-dienoyl-CoA + NADPH + H(+) = a 4,5-saturated-(3E)-enoyl-CoA + NADP(+). Its function is as follows. Auxiliary enzyme of beta-oxidation. It participates in the metabolism of unsaturated fatty enoyl-CoA esters having double bonds in both even- and odd-numbered positions. Catalyzes the NADP-dependent reduction of 2,4-dienoyl-CoA to yield trans-3-enoyl-CoA. In Caenorhabditis elegans, this protein is Probable 2,4-dienoyl-CoA reductase 3 [(3E)-enoyl-CoA-producing].